Reading from the N-terminus, the 396-residue chain is Elongation factor Tu (396 aa).

One can recognise a tr-type G domain in the interval 10 to 205 (KPHVNIGTIG…AVDESIPDPV (196 aa)). Residues 19–26 (GHVDHGKT) form a G1 region. GTP is bound at residue 19 to 26 (GHVDHGKT). Position 26 (Thr26) interacts with Mg(2+). The segment at 62–66 (GITIN) is G2. Residues 83–86 (DAPG) form a G3 region. GTP contacts are provided by residues 83–87 (DAPGH) and 138–141 (NKAD). The interval 138–141 (NKAD) is G4. The interval 175–177 (SAL) is G5.

This sequence belongs to the TRAFAC class translation factor GTPase superfamily. Classic translation factor GTPase family. EF-Tu/EF-1A subfamily. Monomer.

It localises to the cytoplasm. It catalyses the reaction GTP + H2O = GDP + phosphate + H(+). Its function is as follows. GTP hydrolase that promotes the GTP-dependent binding of aminoacyl-tRNA to the A-site of ribosomes during protein biosynthesis. This Mycobacterium avium (strain 104) protein is Elongation factor Tu.